Here is a 358-residue protein sequence, read N- to C-terminus: tRNA-specific 2-thiouridylase MnmA (358 aa).

Residues Leu6–Ser13 and Ile32 contribute to the ATP site. The tract at residues Asn93–Asp95 is interaction with target base in tRNA. The active-site Nucleophile is Cys98. A disulfide bridge links Cys98 with Cys193. An ATP-binding site is contributed by Gly121. Residues Lys143–Gln145 are interaction with tRNA. Cys193 acts as the Cysteine persulfide intermediate in catalysis.

Belongs to the MnmA/TRMU family.

It is found in the cytoplasm. It catalyses the reaction S-sulfanyl-L-cysteinyl-[protein] + uridine(34) in tRNA + AH2 + ATP = 2-thiouridine(34) in tRNA + L-cysteinyl-[protein] + A + AMP + diphosphate + H(+). Its function is as follows. Catalyzes the 2-thiolation of uridine at the wobble position (U34) of tRNA, leading to the formation of s(2)U34. The protein is tRNA-specific 2-thiouridylase MnmA of Parabacteroides distasonis (strain ATCC 8503 / DSM 20701 / CIP 104284 / JCM 5825 / NCTC 11152).